Here is a 252-residue protein sequence, read N- to C-terminus: MEKEREKQVYLARLAEQAERYDEMVEAMKAIAKMDVELTVEERNLVSVGYKNVIGARRASWRILSSIEQKEESKGHEQNVKRIKTYRQRVEDELTKICSDILSVIDEHLVPSSTTGESTVFYYKMKGDYYRYLAEFKAGDDRKEASEQSLKAYEAATATASSDLAPTHPIRLGLALNFSVFYYEILNSPERACHLAKQAFDEAIAELDSLSEESYKDSTLIMQLLRDNLTLWTSDLEEGGEHSKGDERQGEN.

It belongs to the 14-3-3 family. As to quaternary structure, homodimer.

In Solanum lycopersicum (Tomato), this protein is 14-3-3 protein 7 (TFT7).